The following is a 319-amino-acid chain: Lambda-crystallin homolog (319 aa).

An N-acetylalanine modification is found at alanine 2. Residue serine 3 is modified to Phosphoserine. Residues 16–17, aspartate 36, glutamate 97, and lysine 102 each bind NAD(+); that span reads LI.

This sequence belongs to the 3-hydroxyacyl-CoA dehydrogenase family. In terms of assembly, homodimer. As to expression, widely expressed, with highest levels in liver. Undetectable in skeletal muscle.

The protein localises to the cytoplasm. It catalyses the reaction L-gulonate + NAD(+) = 3-dehydro-L-gulonate + NADH + H(+). Its activity is regulated as follows. Inhibited by malonate. In terms of biological role, has high L-gulonate 3-dehydrogenase activity. It also exhibits low dehydrogenase activity toward L-3-hydroxybutyrate (HBA) and L-threonate. The chain is Lambda-crystallin homolog (Cryl1) from Mus musculus (Mouse).